A 607-amino-acid polypeptide reads, in one-letter code: Matrix metalloproteinase-16 (607 aa).

Positions 1–31 (MILLTFSTGRRLDFVHHSGVFFLQTLLWILC) are cleaved as a signal peptide. Positions 32–119 (ATVCGTEQYF…SSKFHIRRKR (88 aa)) are excised as a propeptide. The N-linked (GlcNAc...) asparagine glycan is linked to asparagine 83. A Cysteine switch motif is present at residues 99-106 (PRCGVPDQ). Cysteine 101 is a binding site for Zn(2+). Residues 120 to 564 (YALTGQKWQH…LDNTASTVKA (445 aa)) are Extracellular-facing. Residue aspartate 183 participates in Ca(2+) binding. The Zn(2+) site is built by histidine 193 and aspartate 195. Residues aspartate 200, glycine 201, glycine 203, and phenylalanine 205 each coordinate Ca(2+). Histidine 208 is a binding site for Zn(2+). The Ca(2+) site is built by glycine 215, glycine 217, and aspartate 219. Position 221 (histidine 221) interacts with Zn(2+). Positions 223 and 226 each coordinate Ca(2+). Histidine 246 provides a ligand contact to Zn(2+). Glutamate 247 is an active-site residue. Zn(2+) is bound by residues histidine 250 and histidine 256. Residues 281-340 (DDLQGIQKIYGPPDKIPPPTRPLPTVPPHRSIPPADPRKNDRPKPPRPPTGRPSYPGAKP) form a disordered region. Residues 294–315 (DKIPPPTRPLPTVPPHRSIPPA) show a composition bias toward pro residues. 4 Hemopexin repeats span residues 340 to 388 (PNIC…WRGL), 389 to 434 (PPSI…GSGI), 436 to 484 (PHGI…KGIP), and 485 to 532 (ESPQ…FMGC). The cysteines at positions 343 and 532 are disulfide-linked. Residues 565–585 (IAIVIPCILALCLLVLVYTVF) traverse the membrane as a helical segment. Residues 586–607 (QFKRKGTPRHILYCKRSMQEWV) lie on the Cytoplasmic side of the membrane.

Belongs to the peptidase M10A family. Interacts with CSPG4 through CSPG4 chondroitin sulfate glycosaminoglycan. Zn(2+) serves as cofactor. Ca(2+) is required as a cofactor. In terms of processing, the precursor is cleaved by a furin endopeptidase. In terms of tissue distribution, expressed in heart, brain, placenta, ovary and small intestine. Isoform Short is found in the ovary.

It localises to the cell membrane. The protein localises to the secreted. Its subcellular location is the extracellular space. It is found in the extracellular matrix. The protein resides in the cell surface. TIMP-2 shows little inhibitory activity compared to TIMP-1. TIMP-1 seems to have less binding affinity than TIMP-2 for the short isoform. In terms of biological role, endopeptidase that degrades various components of the extracellular matrix, such as collagen type III and fibronectin. Activates progelatinase A. Involved in the matrix remodeling of blood vessels. Isoform short cleaves fibronectin and also collagen type III, but at lower rate. It has no effect on type I, II, IV and V collagen. However, upon interaction with CSPG4, it may be involved in degradation and invasion of type I collagen by melanoma cells. The sequence is that of Matrix metalloproteinase-16 from Homo sapiens (Human).